A 419-amino-acid chain; its full sequence is Serine hydroxymethyltransferase (419 aa).

Residues leucine 121 and glycine 125–leucine 127 each bind (6S)-5,6,7,8-tetrahydrofolate. N6-(pyridoxal phosphate)lysine is present on lysine 229.

It belongs to the SHMT family. Homodimer. Requires pyridoxal 5'-phosphate as cofactor.

The protein localises to the cytoplasm. It catalyses the reaction (6R)-5,10-methylene-5,6,7,8-tetrahydrofolate + glycine + H2O = (6S)-5,6,7,8-tetrahydrofolate + L-serine. It participates in one-carbon metabolism; tetrahydrofolate interconversion. The protein operates within amino-acid biosynthesis; glycine biosynthesis; glycine from L-serine: step 1/1. Functionally, catalyzes the reversible interconversion of serine and glycine with tetrahydrofolate (THF) serving as the one-carbon carrier. This reaction serves as the major source of one-carbon groups required for the biosynthesis of purines, thymidylate, methionine, and other important biomolecules. Also exhibits THF-independent aldolase activity toward beta-hydroxyamino acids, producing glycine and aldehydes, via a retro-aldol mechanism. The protein is Serine hydroxymethyltransferase of Streptomyces griseus subsp. griseus (strain JCM 4626 / CBS 651.72 / NBRC 13350 / KCC S-0626 / ISP 5235).